The sequence spans 271 residues: PH domain-containing protein ECU06_0670 (271 aa).

A disordered region spans residues 26–145 (AKKTLDSSES…EKKNDAFIPP (120 aa)). 3 stretches are compositionally biased toward basic and acidic residues: residues 42-64 (EVGE…EPAM), 92-120 (QPEK…LLDK), and 128-140 (EENA…KKND). Positions 166-267 (NTVVEGWMWK…WVEKLNETIR (102 aa)) constitute a PH domain.

The polypeptide is PH domain-containing protein ECU06_0670 (Encephalitozoon cuniculi (strain GB-M1) (Microsporidian parasite)).